The following is a 357-amino-acid chain: 3-isopropylmalate dehydrogenase (357 aa).

Residues Arg99, Arg109, Arg133, and Asp223 each coordinate substrate. The Mg(2+) site is built by Asp223, Asp247, and Asp251. Gly283–Asp295 provides a ligand contact to NAD(+).

Belongs to the isocitrate and isopropylmalate dehydrogenases family. LeuB type 2 subfamily. Homodimer. It depends on Mg(2+) as a cofactor. Mn(2+) serves as cofactor.

Its subcellular location is the cytoplasm. The enzyme catalyses (2R,3S)-3-isopropylmalate + NAD(+) = 4-methyl-2-oxopentanoate + CO2 + NADH. The protein operates within amino-acid biosynthesis; L-leucine biosynthesis; L-leucine from 3-methyl-2-oxobutanoate: step 3/4. Catalyzes the oxidation of 3-carboxy-2-hydroxy-4-methylpentanoate (3-isopropylmalate) to 3-carboxy-4-methyl-2-oxopentanoate. The product decarboxylates to 4-methyl-2 oxopentanoate. In Leifsonia xyli subsp. xyli (strain CTCB07), this protein is 3-isopropylmalate dehydrogenase.